A 591-amino-acid polypeptide reads, in one-letter code: MHRYRTHTCGALRDSHIDQTVRLSGWCHRIRDHGGVLFIDLRDHYGLTQCVADPDSPAFKDAEKLRAEWVVRIDGKVRRRPEGTDNPDLPTGAVEVFVTEIEVLGPAGELPLPVFGEQEYPEDVRLRYRFLDLRREKLHQNIMTRGAIVDSMRRRMKEQGFFEFQTPILTASSPEGARDFLVPSRIHPGKFYALPQAPQQYKQLLMMSGFDRYFQIAPCFRDEDPRADRLPGEFYQLDVEMSFVTQDDIFAAMEPVITGVFEEFAKGKRVTKGWPRIAFADSMRKYGTDKPDLRNPIEMQDVSEHFRGSGFKVFARMLEEQRNQVWAIPGPGGGSRAFCDRMNSWAQGEGQPGLGYIMWREGGEGAGPLANNIGPERTEAIRTALGLKAGDAAFFVAGDPSKFVKFAGLARTKVGEELNLIDKDQFALAWVVDFPMYEYNEDDKKVDFSHNPFSMPQGGMEALTSQDPLTIKAFQYDITCNGYEIASGGIRNHRPEAMVKAFEIAGYGEQEVVDRFGGMYRAFQYGAPPHGGMAAGVDRIVMLLCGTTNLREISLFPMNQRAEDLLMGAPSEVSPKQLRELHIRLNLPDTK.

Glu-175 lines the L-aspartate pocket. An aspartate region spans residues 199–202; it reads QQYK. Positions 221 and 450 each coordinate L-aspartate. 221 to 223 is a binding site for ATP; sequence RDE. Position 484 (Glu-484) interacts with ATP. L-aspartate is bound at residue Arg-491. 536 to 539 contacts ATP; the sequence is GVDR.

Belongs to the class-II aminoacyl-tRNA synthetase family. Type 1 subfamily. In terms of assembly, homodimer.

The protein localises to the cytoplasm. It catalyses the reaction tRNA(Asx) + L-aspartate + ATP = L-aspartyl-tRNA(Asx) + AMP + diphosphate. Aspartyl-tRNA synthetase with relaxed tRNA specificity since it is able to aspartylate not only its cognate tRNA(Asp) but also tRNA(Asn). Reaction proceeds in two steps: L-aspartate is first activated by ATP to form Asp-AMP and then transferred to the acceptor end of tRNA(Asp/Asn). This is Aspartate--tRNA(Asp/Asn) ligase from Rhodopseudomonas palustris (strain TIE-1).